Reading from the N-terminus, the 167-residue chain is Small ribosomal subunit protein uS9 (167 aa).

Residues 1 to 41 (MNTEAVAPDVAEEEVLTSYTSESSASADDAPKKERPALTVS) form a disordered region. Polar residues predominate over residues 17 to 26 (TSYTSESSAS).

It belongs to the universal ribosomal protein uS9 family.

This chain is Small ribosomal subunit protein uS9, found in Renibacterium salmoninarum (strain ATCC 33209 / DSM 20767 / JCM 11484 / NBRC 15589 / NCIMB 2235).